The chain runs to 291 residues: Undecaprenyl-diphosphatase (291 aa).

8 helical membrane-spanning segments follow: residues 1–21 (MLILELIKGIILGIVEGLTEF), 48–68 (SAFTFKIVIQLGSVFAGAWVF), 99–119 (LHIIVGMIPAGVLGLLFDDVI), 123–143 (LFSVPTVMIGLFIGAIYMIIA), 159–179 (INYFQAFVIGLSQAIAMWPGF), 200–220 (SDFTFIMAVPVMLAASGLSLV), 236–256 (LGFLAAFIVGLIAIKTFLYLI), and 269–289 (IVLVIIIAILYFGFGIGQGIT).

Belongs to the UppP family.

Its subcellular location is the cell membrane. It catalyses the reaction di-trans,octa-cis-undecaprenyl diphosphate + H2O = di-trans,octa-cis-undecaprenyl phosphate + phosphate + H(+). Catalyzes the dephosphorylation of undecaprenyl diphosphate (UPP). Confers resistance to bacitracin. In Staphylococcus saprophyticus subsp. saprophyticus (strain ATCC 15305 / DSM 20229 / NCIMB 8711 / NCTC 7292 / S-41), this protein is Undecaprenyl-diphosphatase.